The following is a 215-amino-acid chain: Large ribosomal subunit protein uL4 (215 aa).

Residues Arg-43–Ser-97 form a disordered region.

It belongs to the universal ribosomal protein uL4 family. Part of the 50S ribosomal subunit.

One of the primary rRNA binding proteins, this protein initially binds near the 5'-end of the 23S rRNA. It is important during the early stages of 50S assembly. It makes multiple contacts with different domains of the 23S rRNA in the assembled 50S subunit and ribosome. In terms of biological role, forms part of the polypeptide exit tunnel. The chain is Large ribosomal subunit protein uL4 from Brachyspira hyodysenteriae (strain ATCC 49526 / WA1).